The following is a 138-amino-acid chain: Basic phospholipase A2 RV-4 (138 aa).

The N-terminal stretch at 1 to 16 (MRTLWIVAVCLIGVEG) is a signal peptide. 7 disulfide bridges follow: Cys42-Cys131, Cys44-Cys60, Cys59-Cys111, Cys65-Cys138, Cys66-Cys104, Cys73-Cys97, and Cys91-Cys102. The Ca(2+) site is built by Tyr43, Gly45, and Gly47. His63 is an active-site residue. Position 64 (Asp64) interacts with Ca(2+). Asp105 is a catalytic residue.

The protein belongs to the phospholipase A2 family. Group II subfamily. D49 sub-subfamily. In terms of assembly, heterodimer of a weakly toxic basic protein having phospholipase A2 activity (RV-4) and a non-toxic acidic protein which inhibits its enzymatic activity but potentiates its lethal potency and neurotoxicity (RV-7). Ca(2+) serves as cofactor. As to expression, expressed by the venom gland.

The protein localises to the secreted. The enzyme catalyses a 1,2-diacyl-sn-glycero-3-phosphocholine + H2O = a 1-acyl-sn-glycero-3-phosphocholine + a fatty acid + H(+). Functionally, heterodimer RV-4/RV-7: acts as a presynaptic neurotoxin. In terms of biological role, monomer: snake venom phospholipase A2 (PLA2) that acts as a presynaptic neurotoxin. PLA2 catalyzes the calcium-dependent hydrolysis of the 2-acyl groups in 3-sn-phosphoglycerides. In Daboia siamensis (Eastern Russel's viper), this protein is Basic phospholipase A2 RV-4.